A 98-amino-acid polypeptide reads, in one-letter code: Ferredoxin-like protein (98 aa).

This sequence to ferredoxins from P.putida and C.tartarivorum, ferredoxin I from A.vinelandii, ferredoxin II from D.desulfuricans.

Could be a 3Fe-4S cluster-containing protein. This Rhizobium leguminosarum bv. trifolii protein is Ferredoxin-like protein (fixX).